The chain runs to 109 residues: Aquaporin-2 (109 aa).

Over 1 to 6 the chain is Cytoplasmic; sequence SVAFSR. Residues 7–27 form a helical membrane-spanning segment; it reads AVFAEFLATLLFVFFGLGSAL. The Extracellular segment spans residues 28 to 35; it reads NWPQALPS. Residues 36 to 54 traverse the membrane as a helical segment; the sequence is VLQIAMAFGLGIGTLVQAL. At 55-59 the chain is on the cytoplasmic side; sequence GHVSG. Residues 60–69 constitute an intramembrane region (discontinuously helical); the sequence is AHINPAVTVA. Residues 63–65 carry the NPA 1 motif; sequence NPA. Topologically, residues 70 to 80 are cytoplasmic; the sequence is CLVGCHVSFLR. The helical transmembrane segment at 81–102 threads the bilayer; that stretch reads AAFYVAAQLLGAVAGAALLHEI. Residues 103–109 lie on the Extracellular side of the membrane; that stretch reads TPPHVRG.

This sequence belongs to the MIP/aquaporin (TC 1.A.8) family. Homotetramer. Serine phosphorylation is necessary and sufficient for expression at the apical membrane. Endocytosis is not phosphorylation-dependent. In terms of processing, N-glycosylated.

It localises to the apical cell membrane. Its subcellular location is the basolateral cell membrane. It is found in the cell membrane. The protein resides in the cytoplasmic vesicle membrane. The protein localises to the golgi apparatus. It localises to the trans-Golgi network membrane. The catalysed reaction is H2O(in) = H2O(out). The enzyme catalyses glycerol(in) = glycerol(out). Functionally, forms a water-specific channel that provides the plasma membranes of renal collecting duct with high permeability to water, thereby permitting water to move in the direction of an osmotic gradient. Plays an essential role in renal water homeostasis. Could also be permeable to glycerol. The polypeptide is Aquaporin-2 (Canis lupus familiaris (Dog)).